A 364-amino-acid polypeptide reads, in one-letter code: Chorismate synthase (364 aa).

Arg-47 lines the NADP(+) pocket. FMN is bound by residues 124 to 126 (RGS), 240 to 241 (NA), Gly-284, 299 to 303 (KPTPS), and Arg-326.

Belongs to the chorismate synthase family. Requires FMNH2 as cofactor.

The enzyme catalyses 5-O-(1-carboxyvinyl)-3-phosphoshikimate = chorismate + phosphate. The protein operates within metabolic intermediate biosynthesis; chorismate biosynthesis; chorismate from D-erythrose 4-phosphate and phosphoenolpyruvate: step 7/7. Its function is as follows. Catalyzes the anti-1,4-elimination of the C-3 phosphate and the C-6 proR hydrogen from 5-enolpyruvylshikimate-3-phosphate (EPSP) to yield chorismate, which is the branch point compound that serves as the starting substrate for the three terminal pathways of aromatic amino acid biosynthesis. This reaction introduces a second double bond into the aromatic ring system. This chain is Chorismate synthase, found in Methanobrevibacter smithii (strain ATCC 35061 / DSM 861 / OCM 144 / PS).